Here is a 186-residue protein sequence, read N- to C-terminus: MPNEFELAVAALQRDGVIAYATEAVFGLGCDPDSESAVHRLLAIKQRPVEKGLILIAADLAQLQDYIDLDQLTSEQLARVEASWPGPFTWIMPARSNTPAWLTGQFTTLAVRVTAHPQVQALCRAFGKPLVSTSANLTGEEPARRVADIGELLASQLAYILPGEVGGQANPSEIKDARTGAIIRPS.

The YrdC-like domain occupies 2 to 186; it reads PNEFELAVAA…ARTGAIIRPS (185 aa).

Belongs to the SUA5 family. TsaC subfamily.

It localises to the cytoplasm. It catalyses the reaction L-threonine + hydrogencarbonate + ATP = L-threonylcarbamoyladenylate + diphosphate + H2O. In terms of biological role, required for the formation of a threonylcarbamoyl group on adenosine at position 37 (t(6)A37) in tRNAs that read codons beginning with adenine. Catalyzes the conversion of L-threonine, HCO(3)(-)/CO(2) and ATP to give threonylcarbamoyl-AMP (TC-AMP) as the acyladenylate intermediate, with the release of diphosphate. In Aeromonas hydrophila subsp. hydrophila (strain ATCC 7966 / DSM 30187 / BCRC 13018 / CCUG 14551 / JCM 1027 / KCTC 2358 / NCIMB 9240 / NCTC 8049), this protein is Threonylcarbamoyl-AMP synthase.